Reading from the N-terminus, the 531-residue chain is Probable bifunctional methylthioribulose-1-phosphate dehydratase/enolase-phosphatase E1 2 (531 aa).

Positions Met-1–Asp-248 are methylthioribulose-1-phosphate dehydratase. Cys-120 provides a ligand contact to substrate. Zn(2+)-binding residues include His-138 and His-140. The Proton donor/acceptor; for methylthioribulose-1-phosphate dehydratase activity role is filled by Glu-163. His-213 contacts Zn(2+). An enolase-phosphatase E1 region spans residues Ile-292 to Ile-531. Positions 295 and 297 each coordinate Mg(2+). Substrate-binding positions include Ser-430–Ser-431 and Lys-464. Asp-490 contacts Mg(2+).

In the N-terminal section; belongs to the aldolase class II family. MtnB subfamily. The protein in the C-terminal section; belongs to the HAD-like hydrolase superfamily. MasA/MtnC family. Requires Zn(2+) as cofactor. It depends on Mg(2+) as a cofactor.

The catalysed reaction is 5-(methylsulfanyl)-D-ribulose 1-phosphate = 5-methylsulfanyl-2,3-dioxopentyl phosphate + H2O. It carries out the reaction 5-methylsulfanyl-2,3-dioxopentyl phosphate + H2O = 1,2-dihydroxy-5-(methylsulfanyl)pent-1-en-3-one + phosphate. It functions in the pathway amino-acid biosynthesis; L-methionine biosynthesis via salvage pathway; L-methionine from S-methyl-5-thio-alpha-D-ribose 1-phosphate: step 2/6. The protein operates within amino-acid biosynthesis; L-methionine biosynthesis via salvage pathway; L-methionine from S-methyl-5-thio-alpha-D-ribose 1-phosphate: step 3/6. Its pathway is amino-acid biosynthesis; L-methionine biosynthesis via salvage pathway; L-methionine from S-methyl-5-thio-alpha-D-ribose 1-phosphate: step 4/6. The polypeptide is Probable bifunctional methylthioribulose-1-phosphate dehydratase/enolase-phosphatase E1 2 (Vitis vinifera (Grape)).